A 584-amino-acid polypeptide reads, in one-letter code: Endogenous retrovirus group FC1 Env polyprotein (584 aa).

Positions 1–22 (MARPSPLCLLLLLTLLTPIVPS) are cleaved as a signal peptide. Topologically, residues 23–518 (NSLLTEPPFR…GWWQSPLTTW (496 aa)) are extracellular. N-linked (GlcNAc...) asparagine glycosylation is found at Asn69 and Asn247. Positions 251 to 254 (CFLC) match the CXXC motif. Asn272, Asn276, Asn308, Asn313, Asn322, Asn334, Asn342, and Asn346 each carry an N-linked (GlcNAc...) asparagine glycan. Residues 384-404 (AVFPPLVIGVSLTSSLVASGL) are fusion peptide. The short motif at 449 to 465 (MQNRRALDLLTADKGGT) is the CKS-17 element. Cys466 and Cys473 are joined by a disulfide. Positions 466 to 474 (CMFLGEECC) match the CX6CC motif. Asn478 carries an N-linked (GlcNAc...) asparagine glycan. Residues 519 to 539 (IIPFISPILIICLLLLIAPCV) form a helical membrane-spanning segment. At 540–584 (LKFIKNRISEVSRVTVNQMLLHPYSRLPTSEDHYDDALTQQEAAR) the chain is on the cytoplasmic side.

It belongs to the gamma type-C retroviral envelope protein family. HERV class-I F(c)1 env subfamily. As to quaternary structure, the surface (SU) and transmembrane (TM) proteins form a heterodimer. SU and TM are attached by noncovalent interactions or by a labile interchain disulfide bond. In terms of processing, specific enzymatic cleavages in vivo yield the mature SU and TM proteins. Post-translationally, the CXXC motif is highly conserved across a broad range of retroviral envelope proteins. It is thought to participate in the formation of a labile disulfide bond possibly with the CX6CC motif present in the transmembrane protein. In terms of tissue distribution, low expression in skin, testis and trachea.

The protein resides in the virion. It localises to the cell membrane. In terms of biological role, retroviral envelope proteins mediate receptor recognition and membrane fusion during early infection. Endogenous envelope proteins may have kept, lost or modified their original function during evolution. This endogenous envelope protein has lost its original fusogenic properties. Functionally, SU mediates receptor recognition. TM anchors the envelope heterodimer to the viral membrane through one transmembrane domain. The other hydrophobic domain, called fusion peptide, mediates fusion of the viral membrane with the target cell membrane. This is Endogenous retrovirus group FC1 Env polyprotein (ERVFC1) from Homo sapiens (Human).